The chain runs to 27 residues: Small ribosomal subunit protein bTHX (27 aa).

Basic residues predominate over residues 1–13 (MGKGDRRTRRGKI). The tract at residues 1–27 (MGKGDRRTRRGKIWRGTYGKYRPRKKK) is disordered.

It belongs to the bacterial ribosomal protein bTHX family. As to quaternary structure, part of the 30S ribosomal subunit.

Its function is as follows. Binds at the top of the head of the 30S subunit. It stabilizes a number of different RNA elements and thus is important for subunit structure. The protein is Small ribosomal subunit protein bTHX (rpsU) of Thermus aquaticus.